The primary structure comprises 555 residues: Zinc finger and SCAN domain-containing protein 21 (555 aa).

Disordered regions lie at residues 1–74 (MTKV…SKDK), 102–133 (TIKA…YHDT), 204–243 (LDEP…TQHV), and 263–354 (EEVF…RPAP). 3 consecutive repeat copies span residues 18 to 56 (ESMG…QDTL), 57 to 95 (EPMG…QDTL), and 96 to 134 (EQLG…HDTP). The interval 18–134 (ESMGPSPIKV…FRQFGYHDTP (117 aa)) is 3 X 39 AA approximate tandem repeats. Lys26 is covalently cross-linked (Glycyl lysine isopeptide (Lys-Gly) (interchain with G-Cter in SUMO2)). An SCAN box domain is found at 122–204 (RQRFRQFGYH…TLLEDLEQEL (83 aa)). Residues 210–240 (QVSSPPNEQKQSWEKMSTSGTAMESLSSTET) are compositionally biased toward polar residues. Positions 280–302 (PQKEDSADEHRSSEEESHADGLK) are enriched in basic and acidic residues. Residues Lys302 and Lys313 each participate in a glycyl lysine isopeptide (Lys-Gly) (interchain with G-Cter in SUMO2) cross-link. Over residues 316 to 332 (SRSERQWANNLERERGT) the composition is skewed to basic and acidic residues. C2H2-type zinc fingers lie at residues 359–381 (YICA…RRTH), 387–409 (YVCT…YRTH), 415–436 (YDCK…QRMH), 442–464 (YQCK…YRIH), 470–492 (YQCN…QRLH), 498–520 (YKCK…HRIH), and 526–548 (YWCS…QRVH). A Glycyl lysine isopeptide (Lys-Gly) (interchain with G-Cter in SUMO2) cross-link involves residue Lys431.

It belongs to the krueppel C2H2-type zinc-finger protein family. Expressed predominantly in the spermatocytes and spermatids of adult testes. It is also present at lower levels in the ovary, brain, spleen, embryo and fetus.

The protein localises to the nucleus. Its function is as follows. Strong transcriptional activator. Plays an important role in spermatogenesis; essential for the progression of meiotic prophase I in spermatocytes. This chain is Zinc finger and SCAN domain-containing protein 21 (Zscan21), found in Mus musculus (Mouse).